The following is a 624-amino-acid chain: Ubiquitin-associated and SH3 domain-containing protein A (624 aa).

Positions 19-60 (RSTPSLLDPLLAMGFPTHTALKALAATGRKTAEAAADWLHGH) constitute a UBA domain. In terms of domain architecture, SH3 spans 238-303 (VHYQTLKALF…PENYTERANE (66 aa)). The phosphatase-like stretch occupies residues 358–624 (RRGILVVRHG…FNWRNWISSN (267 aa)).

As to quaternary structure, homodimer or homooligomer. Interacts with CBL. Part of a complex containing CBL and activated EGFR. Interacts with ubiquitin and with mono-ubiquitinated proteins. Interacts with dynamin.

It localises to the cytoplasm. The protein localises to the nucleus. Interferes with CBL-mediated down-regulation and degradation of receptor-type tyrosine kinases. Promotes accumulation of activated target receptors, such as T-cell receptors, EGFR and PDGFRB, on the cell surface. May inhibit dynamin-dependent endocytic pathways by functionally sequestering dynamin via its SH3 domain. Exhibits negligible protein tyrosine phosphatase activity at neutral pH. May act as a dominant-negative regulator of UBASH3B-dependent dephosphorylation. This chain is Ubiquitin-associated and SH3 domain-containing protein A (Ubash3a), found in Mus musculus (Mouse).